Here is a 247-residue protein sequence, read N- to C-terminus: Complement C1q subcomponent subunit B (247 aa).

The first 22 residues, 1–22 (MKTPRGSVLVLLLLNLLRVSWA), serve as a signal peptide directing secretion. Glutamine 23 bears the Pyrrolidone carboxylic acid mark. A 4-hydroxyproline mark is found at proline 29, proline 32, proline 35, proline 47, and proline 50. The tract at residues 30-78 (SIPGIPGIPGKPGSDGKPGTPGTKGEKGLPGLVSHLNENGEKGDPGFPG) is disordered. One can recognise a Collagen-like domain in the interval 39 to 98 (GKPGSDGKPGTPGTKGEKGLPGLVSHLNENGEKGDPGFPGMPGKVGPKGPIGPKGVPGPP). Positions 40–52 (KPGSDGKPGTPGT) are enriched in low complexity. 2 positions are modified to 5-hydroxylysine: lysine 53 and lysine 56. Proline 59 carries the post-translational modification 4-hydroxyproline. Lysine 71 bears the 5-hydroxylysine mark. 4-hydroxyproline is present on residues proline 77 and proline 80. 5-hydroxylysine is present on residues lysine 86 and lysine 92. 4-hydroxyproline is present on residues proline 95 and proline 98. 5-hydroxylysine is present on lysine 104. The C1q domain maps to 111–247 (KATQKIAFSA…GFMLFPDTEA (137 aa)). Cysteine 175 and cysteine 192 are oxidised to a cystine. Positions 193, 194, and 200 each coordinate Ca(2+).

In terms of assembly, core component of the complement C1 complex, a calcium-dependent complex composed of 1 molecule of the C1Q subcomplex, 2 molecules of C1R and 2 molecules of C1S. The C1Q subcomplex is composed 18 subunits: 3 chains of C1QA, C1QB, and C1QC trimerize to form 6 collagen-like triple helices connected to six globular ligand-recognition modules (C1q domain). In terms of processing, hydroxylated on lysine and proline residues. Hydroxylated lysine residues can be glycosylated. Bovine C1Q contains up to 66.3 hydroxylysine-galactosylglucose residues. Total percentage hydroxylysine residues glycosylated is 92.0%. Contains no hydroxylysine-monosaccharides.

The protein resides in the secreted. Its subcellular location is the cell surface. Its activity is regulated as follows. The C1Q subcomplex is inhibited by sulfated molecules, such as triterpenoid sulfates, heparan sulfate, or chondroitin sulfates. Its function is as follows. Core component of the complement C1 complex, a multiprotein complex that initiates the classical pathway of the complement system, a cascade of proteins that leads to phagocytosis and breakdown of pathogens and signaling that strengthens the adaptive immune system. The classical complement pathway is initiated by the C1Q subcomplex of the C1 complex, which specifically binds IgG or IgM immunoglobulins complexed with antigens, forming antigen-antibody complexes on the surface of pathogens: C1QA, together with C1QB and C1QC, specifically recognizes and binds the Fc regions of IgG or IgM via its C1q domain. Immunoglobulin-binding activates the proenzyme C1R, which cleaves C1S, initiating the proteolytic cascade of the complement system. The C1Q subcomplex is activated by a hexamer of IgG complexed with antigens, while it is activated by a pentameric IgM. The C1Q subcomplex also recognizes and binds phosphatidylserine exposed on the surface of cells undergoing programmed cell death, possibly promoting activation of the complement system. This chain is Complement C1q subcomponent subunit B (C1QB), found in Bos taurus (Bovine).